The sequence spans 360 residues: Phospho-N-acetylmuramoyl-pentapeptide-transferase (360 aa).

The next 10 membrane-spanning stretches (helical) occupy residues 27–47 (GAMI…INSL), 71–91 (TPTM…LLWA), 93–113 (LASV…AIGF), 128–148 (FSGK…AFTI), 168–188 (LVIN…VGAG), 199–219 (GLAI…AYLS), 239–259 (LAVV…FNAP), 262–282 (AIFM…TVAV), 288–308 (IVLA…IIQV), and 337–357 (QVVI…LSTL).

It belongs to the glycosyltransferase 4 family. MraY subfamily. The cofactor is Mg(2+).

It is found in the cell inner membrane. It catalyses the reaction UDP-N-acetyl-alpha-D-muramoyl-L-alanyl-gamma-D-glutamyl-meso-2,6-diaminopimeloyl-D-alanyl-D-alanine + di-trans,octa-cis-undecaprenyl phosphate = di-trans,octa-cis-undecaprenyl diphospho-N-acetyl-alpha-D-muramoyl-L-alanyl-D-glutamyl-meso-2,6-diaminopimeloyl-D-alanyl-D-alanine + UMP. The protein operates within cell wall biogenesis; peptidoglycan biosynthesis. In terms of biological role, catalyzes the initial step of the lipid cycle reactions in the biosynthesis of the cell wall peptidoglycan: transfers peptidoglycan precursor phospho-MurNAc-pentapeptide from UDP-MurNAc-pentapeptide onto the lipid carrier undecaprenyl phosphate, yielding undecaprenyl-pyrophosphoryl-MurNAc-pentapeptide, known as lipid I. The protein is Phospho-N-acetylmuramoyl-pentapeptide-transferase of Brucella ovis (strain ATCC 25840 / 63/290 / NCTC 10512).